A 311-amino-acid chain; its full sequence is Porphobilinogen deaminase (311 aa).

Cys242 carries the S-(dipyrrolylmethanemethyl)cysteine modification.

This sequence belongs to the HMBS family. As to quaternary structure, monomer. Dipyrromethane serves as cofactor.

The enzyme catalyses 4 porphobilinogen + H2O = hydroxymethylbilane + 4 NH4(+). It functions in the pathway porphyrin-containing compound metabolism; protoporphyrin-IX biosynthesis; coproporphyrinogen-III from 5-aminolevulinate: step 2/4. Tetrapolymerization of the monopyrrole PBG into the hydroxymethylbilane pre-uroporphyrinogen in several discrete steps. This chain is Porphobilinogen deaminase (hemC), found in Neisseria meningitidis serogroup A / serotype 4A (strain DSM 15465 / Z2491).